Here is a 227-residue protein sequence, read N- to C-terminus: 4-nitrobenzoate reductase (227 aa).

FMN is bound at residue 15 to 19 (RRAVR). NAD(+) is bound by residues Ser-45, Tyr-102, and Ile-107. Arg-213 contacts FMN.

The protein belongs to the nitroreductase family. FMN is required as a cofactor.

It catalyses the reaction 4-nitrobenzoate + 2 NADH + 2 H(+) = 4-hydroxylaminobenzoate + 2 NAD(+) + H2O. In terms of biological role, nitroreductase involved in the degradation of nitroaromatic compounds. Catalyzes the conversion of 4-nitrobenzoate to 4-hydroxylaminobenzoate. Required for the catabolism of 4-nitrotoluene. In Pseudomonas putida (Arthrobacter siderocapsulatus), this protein is 4-nitrobenzoate reductase.